Consider the following 95-residue polypeptide: NADH-quinone oxidoreductase subunit K (95 aa).

3 consecutive transmembrane segments (helical) span residues 1-21, 25-45, and 59-79; these read MSYL…VLTR, ILVF…LVGF, and MVIA…VAIF.

It belongs to the complex I subunit 4L family. In terms of assembly, NDH-1 is composed of 15 different subunits. Subunits NuoA, H, J, K, L, M, N constitute the membrane sector of the complex.

The protein resides in the cell inner membrane. It catalyses the reaction a quinone + NADH + 5 H(+)(in) = a quinol + NAD(+) + 4 H(+)(out). Functionally, NDH-1 shuttles electrons from NADH, via FMN and iron-sulfur (Fe-S) centers, to quinones in the respiratory chain. The immediate electron acceptor for the enzyme in this species is believed to be a menaquinone. Couples the redox reaction to proton translocation (for every two electrons transferred, four hydrogen ions are translocated across the cytoplasmic membrane), and thus conserves the redox energy in a proton gradient. The chain is NADH-quinone oxidoreductase subunit K from Thermus thermophilus (strain ATCC BAA-163 / DSM 7039 / HB27).